The following is a 247-amino-acid chain: UPF0280 protein MmarC7_0482 (247 aa).

The protein belongs to the UPF0280 family.

This Methanococcus maripaludis (strain C7 / ATCC BAA-1331) protein is UPF0280 protein MmarC7_0482.